Here is a 381-residue protein sequence, read N- to C-terminus: DNA double-strand break repair protein Mre11 (381 aa).

Residues aspartate 9, histidine 11, aspartate 50, and aspartate 85 each coordinate Mn(2+). The active-site Proton donor is histidine 86. Residues histidine 156, histidine 187, and histidine 189 each contribute to the Mn(2+) site.

Belongs to the MRE11/RAD32 family. In terms of assembly, homodimer. Forms a heterotetramer composed of two Mre11 subunits and two Rad50 subunits. The cofactor is Mn(2+).

With respect to regulation, nuclease activity is regulated by Rad50. Its function is as follows. Part of the Rad50/Mre11 complex, which is involved in the early steps of DNA double-strand break (DSB) repair. The complex may facilitate opening of the processed DNA ends to aid in the recruitment of HerA and NurA. Mre11 binds to DSB ends and has both double-stranded 3'-5' exonuclease activity and single-stranded endonuclease activity. This chain is DNA double-strand break repair protein Mre11, found in Saccharolobus solfataricus (strain ATCC 35092 / DSM 1617 / JCM 11322 / P2) (Sulfolobus solfataricus).